The primary structure comprises 323 residues: DNA-directed RNA polymerase subunit alpha 1 (323 aa).

Residues 1–228 (MSNNNSKQEF…EQISVFVSLR (228 aa)) form an alpha N-terminal domain (alpha-NTD) region. Residues 244-323 (IDPILLKPID…DNFRELVEGK (80 aa)) form an alpha C-terminal domain (alpha-CTD) region.

Belongs to the RNA polymerase alpha chain family. In terms of assembly, homodimer. The RNAP catalytic core consists of 2 alpha, 1 beta, 1 beta' and 1 omega subunit. When a sigma factor is associated with the core the holoenzyme is formed, which can initiate transcription.

The enzyme catalyses RNA(n) + a ribonucleoside 5'-triphosphate = RNA(n+1) + diphosphate. Functionally, DNA-dependent RNA polymerase catalyzes the transcription of DNA into RNA using the four ribonucleoside triphosphates as substrates. This Francisella tularensis subsp. novicida (strain U112) protein is DNA-directed RNA polymerase subunit alpha 1.